A 70-amino-acid polypeptide reads, in one-letter code: MKKGIHPEMRLLTVRCACGAEHKIWTTKEQLKIDVCSNCHPLYKGSGGASLIVDTEGRVQKFKKKFEGKY.

Zn(2+) is bound by residues C16, C18, C36, and C39.

Belongs to the bacterial ribosomal protein bL31 family. Type A subfamily. Part of the 50S ribosomal subunit. Zn(2+) is required as a cofactor.

In terms of biological role, binds the 23S rRNA. The sequence is that of Large ribosomal subunit protein bL31 from Fervidobacterium nodosum (strain ATCC 35602 / DSM 5306 / Rt17-B1).